Reading from the N-terminus, the 361-residue chain is Phosphoribosylformylglycinamidine cyclo-ligase (361 aa).

Belongs to the AIR synthase family.

The protein localises to the cytoplasm. The catalysed reaction is 2-formamido-N(1)-(5-O-phospho-beta-D-ribosyl)acetamidine + ATP = 5-amino-1-(5-phospho-beta-D-ribosyl)imidazole + ADP + phosphate + H(+). Its pathway is purine metabolism; IMP biosynthesis via de novo pathway; 5-amino-1-(5-phospho-D-ribosyl)imidazole from N(2)-formyl-N(1)-(5-phospho-D-ribosyl)glycinamide: step 2/2. This Bartonella quintana (strain Toulouse) (Rochalimaea quintana) protein is Phosphoribosylformylglycinamidine cyclo-ligase.